The chain runs to 96 residues: Co-chaperonin GroES (96 aa).

The protein belongs to the GroES chaperonin family. In terms of assembly, heptamer of 7 subunits arranged in a ring. Interacts with the chaperonin GroEL.

The protein resides in the cytoplasm. Its function is as follows. Together with the chaperonin GroEL, plays an essential role in assisting protein folding. The GroEL-GroES system forms a nano-cage that allows encapsulation of the non-native substrate proteins and provides a physical environment optimized to promote and accelerate protein folding. GroES binds to the apical surface of the GroEL ring, thereby capping the opening of the GroEL channel. In Legionella jeonii, this protein is Co-chaperonin GroES.